Reading from the N-terminus, the 127-residue chain is Large ribosomal subunit protein bL20 (127 aa).

This sequence belongs to the bacterial ribosomal protein bL20 family.

Its function is as follows. Binds directly to 23S ribosomal RNA and is necessary for the in vitro assembly process of the 50S ribosomal subunit. It is not involved in the protein synthesizing functions of that subunit. This is Large ribosomal subunit protein bL20 from Akkermansia muciniphila (strain ATCC BAA-835 / DSM 22959 / JCM 33894 / BCRC 81048 / CCUG 64013 / CIP 107961 / Muc).